The chain runs to 626 residues: Phosphomethylpyrimidine synthase (626 aa).

The interval 1 to 22 (MTKQEKAINLSESAQVDQQSVQ) is disordered. Residues 10 to 22 (LSESAQVDQQSVQ) show a composition bias toward polar residues. Substrate-binding positions include Asn232, Met261, Tyr290, His326, 346 to 348 (SRG), 387 to 390 (DGLR), and Glu426. Zn(2+) is bound at residue His430. Tyr453 is a substrate binding site. Position 494 (His494) interacts with Zn(2+). Positions 574, 577, and 582 each coordinate [4Fe-4S] cluster.

This sequence belongs to the ThiC family. As to quaternary structure, homodimer. [4Fe-4S] cluster is required as a cofactor.

It carries out the reaction 5-amino-1-(5-phospho-beta-D-ribosyl)imidazole + S-adenosyl-L-methionine = 4-amino-2-methyl-5-(phosphooxymethyl)pyrimidine + CO + 5'-deoxyadenosine + formate + L-methionine + 3 H(+). It participates in cofactor biosynthesis; thiamine diphosphate biosynthesis. Its function is as follows. Catalyzes the synthesis of the hydroxymethylpyrimidine phosphate (HMP-P) moiety of thiamine from aminoimidazole ribotide (AIR) in a radical S-adenosyl-L-methionine (SAM)-dependent reaction. The sequence is that of Phosphomethylpyrimidine synthase from Pseudomonas putida (strain GB-1).